The sequence spans 323 residues: Peridinin-chlorophyll a-binding protein 3 (323 aa).

A run of 2 repeats spans residues 1-173 (DGIA…RYVP) and 174-323 (DGPV…SAVV).

As to quaternary structure, homotrimer.

Its subcellular location is the plastid. It is found in the chloroplast. In terms of biological role, water-soluble antenna for capture of solar energy in the blue-green range. Peridinin is an asymmetric carotenoid. This chain is Peridinin-chlorophyll a-binding protein 3, found in Amphidinium carterae (Dinoflagellate).